Consider the following 423-residue polypeptide: Lipase member M (423 aa).

The N-terminal stretch at 1-33 (MLETLSRQWIVSHRMEMWLLILVAYMFQRNVNS) is a signal peptide. N-linked (GlcNAc...) asparagine glycosylation occurs at Asn-48. An AB hydrolase-1 domain is found at 92 to 392 (PVVLLQHGLV…EWAHVDFIWG (301 aa)). The Nucleophile role is filled by Ser-186. Cysteines 260 and 269 form a disulfide. Catalysis depends on charge relay system residues Asp-357 and His-386.

The protein belongs to the AB hydrolase superfamily. Lipase family. In terms of tissue distribution, exclusively expressed in the epidermis within the granular keratinocytes.

The protein resides in the secreted. Its function is as follows. Plays a highly specific role in the last step of keratinocyte differentiation. May have an essential function in lipid metabolism of the most differentiated epidermal layers. The sequence is that of Lipase member M (LIPM) from Homo sapiens (Human).